The sequence spans 286 residues: 4-diphosphocytidyl-2-C-methyl-D-erythritol kinase (286 aa).

K11 is an active-site residue. 94-104 (PMGGGIGGGSS) lines the ATP pocket. The active site involves D136.

This sequence belongs to the GHMP kinase family. IspE subfamily.

It carries out the reaction 4-CDP-2-C-methyl-D-erythritol + ATP = 4-CDP-2-C-methyl-D-erythritol 2-phosphate + ADP + H(+). Its pathway is isoprenoid biosynthesis; isopentenyl diphosphate biosynthesis via DXP pathway; isopentenyl diphosphate from 1-deoxy-D-xylulose 5-phosphate: step 3/6. Functionally, catalyzes the phosphorylation of the position 2 hydroxy group of 4-diphosphocytidyl-2C-methyl-D-erythritol. This chain is 4-diphosphocytidyl-2-C-methyl-D-erythritol kinase, found in Pseudomonas putida (strain GB-1).